The sequence spans 592 residues: ATP-dependent lipid A-core flippase (592 aa).

Helical transmembrane passes span 31–51, 76–96, 134–154, 161–181, 261–281, and 288–308; these read LSSFILAMVAMGVVAATEGII, AMLVGIAVVRGVAQFGATYFL, AVIFEVNQVLQVLTGVFITLV, LALLIFLFYTNWRLTLVVAVI, VTQFLAALALSVILAIAMVQA, and VGGFTGFVMAMLLLISPLKHL. The ABC transmembrane type-1 domain maps to 35-317; it reads ILAMVAMGVV…LTDVNQPMQR (283 aa). Residues 349–587 form the ABC transporter domain; the sequence is LRFEHVTFRY…DGLYAGLHRI (239 aa). 383–390 contacts ATP; sequence GPSGSGKT.

It belongs to the ABC transporter superfamily. Lipid exporter (TC 3.A.1.106) family. As to quaternary structure, homodimer.

The protein resides in the cell inner membrane. It catalyses the reaction ATP + H2O + lipid A-core oligosaccharideSide 1 = ADP + phosphate + lipid A-core oligosaccharideSide 2.. Functionally, involved in lipopolysaccharide (LPS) biosynthesis. Translocates lipid A-core from the inner to the outer leaflet of the inner membrane. Transmembrane domains (TMD) form a pore in the inner membrane and the ATP-binding domain (NBD) is responsible for energy generation. The chain is ATP-dependent lipid A-core flippase from Ralstonia nicotianae (strain ATCC BAA-1114 / GMI1000) (Ralstonia solanacearum).